The chain runs to 66 residues: Small archaeal modifier protein 2 (66 aa).

Lys-58 participates in a covalent cross-link: Glycyl lysine isopeptide (Lys-Gly) (interchain with G-Cter in SAMP2). Gly-66 bears the 1-thioglycine; alternate mark. Gly-66 carries the glycyl adenylate; alternate modification. Gly-66 participates in a covalent cross-link: Glycyl lysine isopeptide (Gly-Lys) (interchain with K-? in acceptor proteins); alternate.

In terms of assembly, monomer. Monomeric and polymeric forms interact with NcsA. In terms of processing, the C-terminal glycine is likely acyl-adenylated (-COAMP) by UbaA, and also probably thiocarboxylated (-COSH) to function in sulfur transfer.

Its function is as follows. Functions as a protein modifier covalently attached to lysine residues of substrate proteins, as well as a sulfur carrier in tRNA thiolation. The protein modification process is termed sampylation and involves the formation of an isopeptide bond between the SAMP2 C-terminal glycine carboxylate and the epsilon-amino group of lysine residues on target proteins. Is able to form polymeric chains with itself at Lys-58, similar to ubiquitin and other ubiquitin-like proteins. May serve as a proteolytic signal in the cell to target proteins for degradation by proteasomes. In Haloferax volcanii (strain ATCC 29605 / DSM 3757 / JCM 8879 / NBRC 14742 / NCIMB 2012 / VKM B-1768 / DS2) (Halobacterium volcanii), this protein is Small archaeal modifier protein 2 (samp2).